The primary structure comprises 265 residues: Apolipoprotein A-I (265 aa).

The N-terminal stretch at 1-18 is a signal peptide; it reads MKAVVLTLAVLFLTGSQA. 2 tandem repeats follow at residues 67-88 and 89-110. Residues 67–265 are 10 X approximate tandem repeats; it reads LKLVDNWDTL…IDEAAKKLTA (199 aa). The 3; half-length repeat unit spans residues 111–121; that stretch reads KDLEDVRQKTQ. 5 repeat units span residues 122 to 143, 144 to 165, 166 to 187, 188 to 209, and 210 to 231. The residue at position 193 (Met193) is a Methionine sulfoxide. A 9; half-length repeat occupies 232-242; it reads PVLEDIHQGLM. Met242 and Met244 each carry methionine sulfoxide. Repeat 10 spans residues 243–265; it reads PMWESFKTGVLNVIDEAAKKLTA.

It belongs to the apolipoprotein A1/A4/E family. In terms of assembly, homodimer. Interacts with APOA1BP and CLU. Component of a sperm activating protein complex (SPAP), consisting of APOA1, an immunoglobulin heavy chain, an immunoglobulin light chain and albumin. Interacts with NDRG1. Interacts with SCGB3A2. Interacts with NAXE and YJEFN3. In terms of processing, glycosylated. Post-translationally, palmitoylated. Phosphorylation sites are present in the extracellular medium. In terms of tissue distribution, major protein of plasma HDL, also found in chylomicrons.

The protein localises to the secreted. Functionally, participates in the reverse transport of cholesterol from tissues to the liver for excretion by promoting cholesterol efflux from tissues and by acting as a cofactor for the lecithin cholesterol acyltransferase (LCAT). As part of the SPAP complex, activates spermatozoa motility. The sequence is that of Apolipoprotein A-I (APOA1) from Tupaia belangeri (Common tree shrew).